Reading from the N-terminus, the 349-residue chain is Flap endonuclease 1 (349 aa).

The tract at residues 1 to 98 (MDLADLVKDV…EELERRRKAK (98 aa)) is N-domain. Mg(2+) is bound by residues Asp27, Asp80, Glu152, Glu154, Asp173, Asp175, and Asp236. Residues 116–258 (ELRKYSQAIL…RALKIIKKYG (143 aa)) form an I-domain region. The segment at 341–349 (RQTGLDRWF) is interaction with PCNA.

The protein belongs to the XPG/RAD2 endonuclease family. FEN1 subfamily. In terms of assembly, interacts with PCNA via subunit PCNA1. The cofactor is Mg(2+).

Its activity is regulated as follows. Heterotrimeric PCNA stimulates the nuclease activity without altering cleavage specificity. Structure-specific nuclease with 5'-flap endonuclease and 5'-3' exonuclease activities involved in DNA replication and repair. During DNA replication, cleaves the 5'-overhanging flap structure that is generated by displacement synthesis when DNA polymerase encounters the 5'-end of a downstream Okazaki fragment. Binds the unpaired 3'-DNA end and kinks the DNA to facilitate 5' cleavage specificity. Cleaves one nucleotide into the double-stranded DNA from the junction in flap DNA, leaving a nick for ligation. Also involved in the base excision repair (BER) pathway. Acts as a genome stabilization factor that prevents flaps from equilibrating into structures that lead to duplications and deletions. Also possesses 5'-3' exonuclease activity on nicked or gapped double-stranded DNA. DNA polymerase I, DNA ligase and the flap endonuclease may be constitutively associated with the PCNA heterotrimer forming a scanning complex able to couple DNA synthesis and Okazaki fragment maturation. This is Flap endonuclease 1 from Saccharolobus solfataricus (strain ATCC 35092 / DSM 1617 / JCM 11322 / P2) (Sulfolobus solfataricus).